The following is a 92-amino-acid chain: MSRSVKKGPFIAKSLFKNVNEMNRSGKKKPIKTYSRCSTIIPEMVGNTISVHNGKTWIPVYITENLVGHKLGEFAPTRTFRKHANSDKKVGK.

Belongs to the universal ribosomal protein uS19 family.

In terms of biological role, protein S19 forms a complex with S13 that binds strongly to the 16S ribosomal RNA. The protein is Small ribosomal subunit protein uS19 of Treponema denticola (strain ATCC 35405 / DSM 14222 / CIP 103919 / JCM 8153 / KCTC 15104).